The sequence spans 494 residues: Glutamyl-tRNA(Gln) amidotransferase subunit A, mitochondrial (494 aa).

Catalysis depends on charge relay system residues lysine 79 and serine 160. The Acyl-ester intermediate role is filled by serine 184.

The protein belongs to the amidase family. GatA subfamily. Subunit of the heterotrimeric GatCAB amidotransferase (AdT) complex, composed of A, B and C subunits.

The protein localises to the mitochondrion. The enzyme catalyses L-glutamyl-tRNA(Gln) + L-glutamine + ATP + H2O = L-glutaminyl-tRNA(Gln) + L-glutamate + ADP + phosphate + H(+). Functionally, allows the formation of correctly charged Gln-tRNA(Gln) through the transamidation of misacylated Glu-tRNA(Gln) in the mitochondria. The reaction takes place in the presence of glutamine and ATP through an activated gamma-phospho-Glu-tRNA(Gln). The polypeptide is Glutamyl-tRNA(Gln) amidotransferase subunit A, mitochondrial (Aedes aegypti (Yellowfever mosquito)).